A 366-amino-acid chain; its full sequence is Dehydrogenase aclE (366 aa).

Positions 1-19 (MSKRIRLGIVGLSADPSHC) are cleaved as a signal peptide. Residue Asn330 is glycosylated (N-linked (GlcNAc...) asparagine).

The protein belongs to the Gfo/Idh/MocA family.

It functions in the pathway mycotoxin biosynthesis. In terms of biological role, dehydrogenase; part of the gene cluster that mediates the biosynthesis of aspirochlorine (or antibiotic A30641), an unusual halogenated spiro compound with distinctive antifungal properties due to selective inhibition of protein biosynthesis, and which is also active against bacteria, viruses, and murine tumor cells. The non-ribosomal peptide synthetase (NRPS) aclP is responsible the formation of the diketopiperazine (DKP) core from the condensation of 2 phenylalanine residues. One Phe residue is tailored into chlorotyrosine by hydroxylation and chlorination, whereas the second Phe undergoes an unprecedented C-C bond cleavage to be converted into glycine. After formation of the DKP, sulfur is incorporated into the DKP by conjugation with glutathione by aclG, followed by its stepwise degradation to the thiol by aclI, aclJ and aclK, and the dithiol oxidation by aclT. In addition, oxygenases (aclB, aclC, aclL and aclO) and O-methyltransferases (aclM and aclU) act as tailoring enzymes to produce the intermediate dechloroaspirochlorine. Ultimately, chlorination of dechloroaspirochlorine by the halogenase aclH is the last step in the aspirochlorine pathway. The chain is Dehydrogenase aclE from Aspergillus oryzae (strain ATCC 42149 / RIB 40) (Yellow koji mold).